The sequence spans 231 residues: U1 small nuclear ribonucleoprotein C (231 aa).

The Matrin-type zinc finger occupies 4–36 (YYCEYCHSYLTHDTLSVRKSHLVGKNHLRITAD). Basic residues predominate over residues 49-61 (HNHKRRHIGKRGR). 3 disordered regions span residues 49-71 (HNHK…SQNE), 137-177 (PQRA…LEPP), and 205-231 (ESKK…RYGN).

The protein belongs to the U1 small nuclear ribonucleoprotein C family. In terms of assembly, U1 snRNP is composed of the 7 core Sm proteins SMB1, SMD1, SMD2, SMD3, SME1, SMX3 and SMX2 (Sm proteins B, D1, D2, D3, E, F and G, respectively) that assemble in a heptameric protein ring on the Sm site of the small nuclear RNA to form the core snRNP, and at least 10 U1 snRNP-specific proteins SNP1/U1-70K, MUD1/U1-A, YHC1/U1-C, LUC7, NAM8, PRP39, PRP40, PRP42, SNU56 and SNU71. YHC1/U1-C interacts with U1 snRNA and the 5' splice-site region of the pre-mRNA.

Its subcellular location is the nucleus. Functionally, component of the spliceosomal U1 snRNP, which is essential for recognition of the pre-mRNA 5' splice-site and the subsequent assembly of the spliceosome. YHC1/U1-C is directly involved in initial 5' splice-site recognition for both constitutive and regulated alternative splicing. The interaction with the 5' splice-site seems to precede base-pairing between the pre-mRNA and the U1 snRNA. Stimulates commitment or early (E) complex formation by stabilizing the base pairing of the 5' end of the U1 snRNA and the 5' splice-site region. This chain is U1 small nuclear ribonucleoprotein C, found in Saccharomyces cerevisiae (strain ATCC 204508 / S288c) (Baker's yeast).